We begin with the raw amino-acid sequence, 64 residues long: UPF0434 protein BAB2_0345 (64 aa).

It belongs to the UPF0434 family.

This is UPF0434 protein BAB2_0345 from Brucella abortus (strain 2308).